The following is a 249-amino-acid chain: Protein LicA homolog (249 aa).

It belongs to the peptidase S49 family.

This chain is Protein LicA homolog (licA), found in Metamycoplasma hominis (strain ATCC 23114 / DSM 25592 / NBRC 14850 / NCTC 10111 / PG21) (Mycoplasma hominis).